The sequence spans 298 residues: MKDFVVITFYKFFDFPDYKERQQPIFNFADEQKIIGTILLAHEGINATIAGTQTALDAMVNFLHQDPRLADLTYKVSTAPKQPFKRLKVKLKQEIVTLGQPNVDPNNTVGTYIDPKDWNDLIQNPDVTLVDTRNDYEVGIGTFKGAINPNTKSFREFPDYVAENLDPQKNAKVAMFCTGGIRCEKATSYLLNQGFQEVYHLKGGILKYLEEIPVAESLWEGECFVFDERVTVKHGLETGHYELCYACGHPIDAEDKTSAAYEIGVSCPYCIEALTPERRSRFEAKWQQRQQMKACQAS.

The 95-residue stretch at glutamine 123–serine 217 folds into the Rhodanese domain. The active-site Cysteine persulfide intermediate is cysteine 177.

Belongs to the TrhO family.

It carries out the reaction uridine(34) in tRNA + AH2 + O2 = 5-hydroxyuridine(34) in tRNA + A + H2O. Its function is as follows. Catalyzes oxygen-dependent 5-hydroxyuridine (ho5U) modification at position 34 in tRNAs. The polypeptide is tRNA uridine(34) hydroxylase (Picosynechococcus sp. (strain ATCC 27264 / PCC 7002 / PR-6) (Agmenellum quadruplicatum)).